We begin with the raw amino-acid sequence, 208 residues long: MKVVEVKHPLVRHKVGLMREADISTKRFRELATEVGSLLTYEATADFETETVTIEGWNGPVTIEQLKGKKVTVVPILRAGLGMMDGVLEHLPSARISVVGIYRDEETLQPVPYFEKIVSNVDERIALVVDPMLATGGSMIATIDLLKKRGCTSIKALVLVAAPEGIKALELAHPDIELYTASIDDCLNEQGYILPGLGDAGDKIFGTK.

5-phospho-alpha-D-ribose 1-diphosphate-binding positions include R78, R103, and 130-138 (DPMLATGGS). Residues I193 and 198 to 200 (GDA) contribute to the uracil site. D199 contacts 5-phospho-alpha-D-ribose 1-diphosphate.

It belongs to the UPRTase family. The cofactor is Mg(2+).

It catalyses the reaction UMP + diphosphate = 5-phospho-alpha-D-ribose 1-diphosphate + uracil. It functions in the pathway pyrimidine metabolism; UMP biosynthesis via salvage pathway; UMP from uracil: step 1/1. With respect to regulation, allosterically activated by GTP. Catalyzes the conversion of uracil and 5-phospho-alpha-D-ribose 1-diphosphate (PRPP) to UMP and diphosphate. This Shewanella frigidimarina (strain NCIMB 400) protein is Uracil phosphoribosyltransferase.